Reading from the N-terminus, the 307-residue chain is Taste receptor type 2 member 10 (307 aa).

Over 1-6 the chain is Extracellular; it reads MLSVVE. The chain crosses the membrane as a helical span at residues 7–27; the sequence is GILILVVISESVFGVLGNGFI. Over 28–42 the chain is Cytoplasmic; sequence GLVNCIDCAKNKLST. Residues 43-63 form a helical membrane-spanning segment; it reads IGFILTGLAISRIFLIWIIIT. The Extracellular portion of the chain corresponds to 64–100; it reads DGFIQIFSPDVYASGNLIEYISYFWVITNQSSIWFAT. Residue N92 is glycosylated (N-linked (GlcNAc...) asparagine). The chain crosses the membrane as a helical span at residues 101-121; that stretch reads SLSIFYFLKIANFSNYIFLWL. The Cytoplasmic segment spans residues 122-126; it reads KSRIN. Residues 127–147 form a helical membrane-spanning segment; the sequence is RVLPLLMGFLLISCLLNFAYI. Over 148 to 179 the chain is Extracellular; that stretch reads VKILNDLKMKNDTVWRLNMYKSEYFIKQLLLN. An N-linked (GlcNAc...) asparagine glycan is attached at N158. Residues 180–200 traverse the membrane as a helical segment; it reads LGVIFFFTLSLITSVLLIISL. Over 201–227 the chain is Cytoplasmic; that stretch reads WRHNRQMQSNVTGLRDSITEAHVKAMK. A helical transmembrane segment spans residues 228-248; sequence VLISFIILFILYFIGIAIEIS. Over 249–257 the chain is Extracellular; it reads YFTVPENKL. The helical transmembrane segment at 258–278 threads the bilayer; the sequence is LLIFGMTTTAIYPWGHSFILI. At 279-307 the chain is on the cytoplasmic side; it reads LGNSKLKQASLRVLQQLKCCEERKNLRAT.

This sequence belongs to the G-protein coupled receptor T2R family.

The protein localises to the membrane. In terms of biological role, receptor that may play a role in the perception of bitterness and is gustducin-linked. May play a role in sensing the chemical composition of the gastrointestinal content. The activity of this receptor may stimulate alpha gustducin, mediate PLC-beta-2 activation and lead to the gating of TRPM5. This Papio hamadryas (Hamadryas baboon) protein is Taste receptor type 2 member 10 (TAS2R10).